A 79-amino-acid chain; its full sequence is Small ribosomal subunit protein bS16 (79 aa).

The protein belongs to the bacterial ribosomal protein bS16 family.

This chain is Small ribosomal subunit protein bS16, found in Solidesulfovibrio magneticus (strain ATCC 700980 / DSM 13731 / RS-1) (Desulfovibrio magneticus).